The following is a 583-amino-acid chain: Estrogen receptor (583 aa).

Residues 1 to 138 (MYPEESRGSG…GFEITKNTRF (138 aa)) form a modulating region. 2 NR C4-type zinc fingers span residues 139-159 (CAVC…CEGC) and 175-199 (CPAT…LRKC). Positions 139 to 204 (CAVCSDYASG…RLRKCYEVGM (66 aa)) form a DNA-binding region, nuclear receptor. The segment at 205-265 (MKGGMRKDRG…PGGRSSLNNM (61 aa)) is hinge. The disordered stretch occupies residues 220 to 263 (EKHGPAQRQTSQNLPTHKASPQDGRKRAMSSSSTSGPGGRSSLN). The 236-residue stretch at 266–501 (PPDQVLLLLQ…DLLLEMLDAH (236 aa)) folds into the NR LBD domain. Positions 506 to 583 (PVKPSQSWSQ…GSHSDCTRIP (78 aa)) are disordered. A compositionally biased stretch (low complexity) spans 539–551 (ASSAGSSSGPQGS).

The protein belongs to the nuclear hormone receptor family. NR3 subfamily. In terms of assembly, binds DNA as a homodimer. Can form a heterodimer with ER-beta.

The protein resides in the nucleus. The steroid hormones and their receptors are involved in the regulation of eukaryotic gene expression and affect cellular proliferation and differentiation in target tissues. This chain is Estrogen receptor (esr1), found in Oreochromis aureus (Israeli tilapia).